The chain runs to 1023 residues: Probable histidine kinase 3 (1023 aa).

Residues 1 to 80 (MDEMSCGGGG…RGWRVVRETW (80 aa)) are Cytoplasmic-facing. The chain crosses the membrane as a helical span at residues 81-101 (WWVLLLWILAGSLGSFYLFLF). Over 102–387 (MNAQSLDKRR…CRFEKKPPWP (286 aa)) the chain is Extracellular. Residues 151-352 (TPSAIDQMTF…TNESPISMYG (202 aa)) enclose the CHASE domain. A helical transmembrane segment spans residues 388-408 (WLAITSSFGTLVIALLTGHIF). Over 409-1023 (QATVHRIAKV…RFFQNHDQVE (615 aa)) the chain is Cytoplasmic. One can recognise a Histidine kinase domain in the interval 445–715 (TVSHEIRTPM…TFTFTAVLMR (271 aa)). The residue at position 448 (His448) is a Phosphohistidine; by autocatalysis. Response regulatory domains lie at 732-854 (NALV…RRAL) and 880-1016 (QIIV…ARFF). The residue at position 783 (Asp783) is a 4-aspartylphosphate. A disordered region spans residues 812-831 (LFLLGSSASSPKGGSDTSRE). A compositionally biased stretch (polar residues) spans 817 to 827 (SSASSPKGGSD). Residue Asp930 is modified to 4-aspartylphosphate.

In terms of processing, activation probably requires a transfer of a phosphate group between a His in the transmitter domain and an Asp of the receiver domain. Highly expressed in young leaves and at lower levels in roots, mature leaves, stems and spikelets.

The protein resides in the cell membrane. It carries out the reaction ATP + protein L-histidine = ADP + protein N-phospho-L-histidine.. In terms of biological role, cytokinin receptor related to bacterial two-component regulators. Functions as a histidine kinase and transmits the stress signal to a downstream MAPK cascade. This chain is Probable histidine kinase 3, found in Oryza sativa subsp. japonica (Rice).